Here is a 792-residue protein sequence, read N- to C-terminus: Protocadherin beta-18 (792 aa).

A signal peptide spans 1–26 (MAARGSCVSRQRQVLFLFLLGGLCLA). Cadherin domains are found at residues 27-133 (GSEL…SPIF), 134-242 (QDKK…APQF), 243-347 (PQEL…APEL), 348-451 (IMSS…APAF), 452-561 (NQTS…APFV), and 568-676 (ASAP…LPEV). Residue N169 is glycosylated (N-linked (GlcNAc...) asparagine). N418 and N452 each carry an N-linked (GlcNAc...) asparagine glycan. A helical transmembrane segment spans residues 693–713 (VIALASVSSLFLLSVLLFVGV).

Its subcellular location is the cell membrane. Potential calcium-dependent cell-adhesion protein. This is Protocadherin beta-18 (Pcdhb18) from Mus musculus (Mouse).